The chain runs to 227 residues: PKHD-type hydroxylase Dtpsy_0528 (227 aa).

Residues 78–178 (TIYPPKFNRY…RVASFFWIES (101 aa)) enclose the Fe2OG dioxygenase domain. Residues histidine 96, aspartate 98, and histidine 159 each coordinate Fe cation. Position 169 (arginine 169) interacts with 2-oxoglutarate.

Fe(2+) is required as a cofactor. Requires L-ascorbate as cofactor.

This is PKHD-type hydroxylase Dtpsy_0528 from Acidovorax ebreus (strain TPSY) (Diaphorobacter sp. (strain TPSY)).